The following is a 734-amino-acid chain: Tripartite terminase subunit 3 (734 aa).

The Nuclear localization signal signature appears at 184 to 190 (ASKRARV). The Walker A motif motif lies at 259 to 266 (VPRRHGKT). Residues 353-358 (LLFVDE) carry the Walker B motif motif. Glu358 (for ATPase activity) is an active-site residue. Active-site for nuclease activity residues include Asp511, Glu583, and Asp707.

This sequence belongs to the herpesviridae TRM3 protein family. As to quaternary structure, interacts with the terminase subunits TRM1 and TRM2. Interacts with portal protein.

The protein localises to the host nucleus. Component of the molecular motor that translocates viral genomic DNA in empty capsid during DNA packaging. Forms a tripartite terminase complex together with TRM1 and TRM2 in the host cytoplasm. Once the complex reaches the host nucleus, it interacts with the capsid portal vertex. This portal forms a ring in which genomic DNA is translocated into the capsid. TRM3 carries an RNase H-like nuclease activity that plays an important role for the cleavage of concatemeric viral DNA into unit length genomes. The protein is Tripartite terminase subunit 3 of Equus caballus (Horse).